Reading from the N-terminus, the 119-residue chain is Beta-2-microglobulin (119 aa).

The signal sequence occupies residues 1–20; the sequence is MARFVVVPLFVLLSLFGLEA. The region spanning 25 to 114 is the Ig-like C1-type domain; that stretch reads PKIQVYSRYP…VTFSTPKTVK (90 aa). Cysteine 45 and cysteine 100 are disulfide-bonded.

The protein belongs to the beta-2-microglobulin family. In terms of assembly, heterodimer of an alpha chain and a beta chain. Beta-2-microglobulin is the beta-chain of major histocompatibility complex class I molecules.

Its subcellular location is the secreted. Its function is as follows. Component of the class I major histocompatibility complex (MHC). Involved in the presentation of peptide antigens to the immune system. The chain is Beta-2-microglobulin (B2M) from Saguinus niger (Black tamarin).